The primary structure comprises 266 residues: uncharacterized protein (266 aa).

The signal sequence occupies residues 1-22 (MRYLKKLAWFISVIILGIFIIG). The N-palmitoyl cysteine moiety is linked to residue C23. A lipid anchor (S-diacylglycerol cysteine) is attached at C23.

Belongs to the staphylococcal tandem lipoprotein family.

It is found in the cell membrane. This is an uncharacterized protein from Staphylococcus aureus (strain USA300).